The following is a 545-amino-acid chain: Leucine-rich repeat LGI family member 2 (545 aa).

The first 28 residues, 1–28 (MALRRGGCGALGLLLLLLGAACLIPRSA), serve as a signal peptide directing secretion. The 37-residue stretch at 29–65 (QVRRLARCPATCSCTKESIICVGSSWVPRIVPGDISS) folds into the LRRNT domain. The N-linked (GlcNAc...) asparagine glycan is linked to asparagine 70. LRR repeat units lie at residues 86–107 (SLQL…AFAG), 110–131 (HLEY…AFRG), and 134–155 (DLTH…VFSD). Residues 167–217 (NKFECDCKAKWLYLWLKMTNSTVSDVLCIGPPEYQEKKLNDVTSFDYECTT) form the LRRCT domain. Asparagine 186 carries N-linked (GlcNAc...) asparagine glycosylation. EAR repeat units lie at residues 219–261 (DFVV…EWDH), 265–307 (NFRS…KYDE), 311–358 (KFVK…KWNS), 360–403 (GFYS…QWNK), 407–450 (KFVP…RWNS), 452–494 (QFVE…QWDK), and 498–540 (LFKK…EHII). Residue asparagine 271 is glycosylated (N-linked (GlcNAc...) asparagine). N-linked (GlcNAc...) asparagine glycosylation occurs at asparagine 402.

Brain, heart and placenta.

The protein localises to the secreted. Required for the development of soma-targeting inhibitory GABAergic synapses made by parvalbumin-positive basket cells. In Homo sapiens (Human), this protein is Leucine-rich repeat LGI family member 2 (LGI2).